The primary structure comprises 403 residues: MEPAGPCGFCPAGEVQPARYTCPRCNAPYCSLRCYRTHGTCAENFYRDQVLGELRGCSAPPSRLASALRRLRQQRETEDEPGEAGLSSGPAPGGLSGLWERLAPGEKAAFERLLSRGEAGRLLPPWRPWWWNRGAGPQLLEELDNAPGSDAAELELAPARTPPDSVKDASAAEPAAAERVLGDVPGACTPVVPTRIPAIVSLSRGPVSPLVRFQLPNVLFAYAHTLALYHGGDDALLSDFCATLLGVSGALGAQQVFASAEEALQAAAHVLEAGEHPPGPLGTRGAMHEVARILLGEGPTNQKGYTLAALGDLAQTLGRARKQAVAREERDHLYRARKKCQFLLAWTNENEAALTPLALDCARAHQAHAVVAEEVAALTGELERLWGGPVPPAPRTLIEELPS.

Residue Met1 is modified to N-acetylmethionine. Residues Cys7, Cys10, Cys22, Cys25, Cys30, Cys34, His38, and Cys41 each coordinate Zn(2+). The HIT-type zinc-finger motif lies at 7–41; that stretch reads CGFCPAGEVQPARYTCPRCNAPYCSLRCYRTHGTC. The interval 72-98 is disordered; that stretch reads RQQRETEDEPGEAGLSSGPAPGGLSGL. Thr161 bears the Phosphothreonine mark.

As to quaternary structure, interacts (via HIT-type zinc finger) with RUVBL2 in the presence of ATP or ADP; shows a stronger interaction in the presence of ADP. Low expression in most tissues; highly expressed in testis.

Functionally, may act as a bridging factor mediating the interaction between the R2TP/Prefoldin-like (R2TP/PFDL) complex and U5 small nuclear ribonucleoprotein (U5 snRNP). Required for the interaction of R2TP complex subunit RPAP3 and prefoldin-like subunit URI1 with U5 snRNP proteins EFTUD2 and PRPF8. May play a role in regulating the composition of the U5 snRNP complex. The sequence is that of Zinc finger HIT domain-containing protein 2 (ZNHIT2) from Homo sapiens (Human).